We begin with the raw amino-acid sequence, 254 residues long: Thiazole synthase (254 aa).

Lysine 96 serves as the catalytic Schiff-base intermediate with DXP. 1-deoxy-D-xylulose 5-phosphate contacts are provided by residues glycine 157, 183-184, and 205-206; these read AG and NT.

The protein belongs to the ThiG family. As to quaternary structure, homotetramer. Forms heterodimers with either ThiH or ThiS.

It is found in the cytoplasm. It carries out the reaction [ThiS sulfur-carrier protein]-C-terminal-Gly-aminoethanethioate + 2-iminoacetate + 1-deoxy-D-xylulose 5-phosphate = [ThiS sulfur-carrier protein]-C-terminal Gly-Gly + 2-[(2R,5Z)-2-carboxy-4-methylthiazol-5(2H)-ylidene]ethyl phosphate + 2 H2O + H(+). The protein operates within cofactor biosynthesis; thiamine diphosphate biosynthesis. Its function is as follows. Catalyzes the rearrangement of 1-deoxy-D-xylulose 5-phosphate (DXP) to produce the thiazole phosphate moiety of thiamine. Sulfur is provided by the thiocarboxylate moiety of the carrier protein ThiS. In vitro, sulfur can be provided by H(2)S. The polypeptide is Thiazole synthase (Clostridium perfringens (strain SM101 / Type A)).